The sequence spans 362 residues: tRNA-specific 2-thiouridylase MnmA 1 (362 aa).

ATP contacts are provided by residues 29-36 (AMSGGVDS) and Met55. Cys109 acts as the Nucleophile in catalysis. A disulfide bond links Cys109 and Cys201. Gly133 provides a ligand contact to ATP. The segment at 151–153 (KDQ) is interaction with tRNA. Catalysis depends on Cys201, which acts as the Cysteine persulfide intermediate.

It belongs to the MnmA/TRMU family.

It localises to the cytoplasm. The catalysed reaction is S-sulfanyl-L-cysteinyl-[protein] + uridine(34) in tRNA + AH2 + ATP = 2-thiouridine(34) in tRNA + L-cysteinyl-[protein] + A + AMP + diphosphate + H(+). In terms of biological role, catalyzes the 2-thiolation of uridine at the wobble position (U34) of tRNA, leading to the formation of s(2)U34. This Fusobacterium nucleatum subsp. nucleatum (strain ATCC 25586 / DSM 15643 / BCRC 10681 / CIP 101130 / JCM 8532 / KCTC 2640 / LMG 13131 / VPI 4355) protein is tRNA-specific 2-thiouridylase MnmA 1.